The sequence spans 509 residues: ATP synthase subunit alpha (509 aa).

169–176 (GDRQTGKT) lines the ATP pocket.

It belongs to the ATPase alpha/beta chains family. In terms of assembly, F-type ATPases have 2 components, CF(1) - the catalytic core - and CF(0) - the membrane proton channel. CF(1) has five subunits: alpha(3), beta(3), gamma(1), delta(1), epsilon(1). CF(0) has three main subunits: a(1), b(2) and c(9-12). The alpha and beta chains form an alternating ring which encloses part of the gamma chain. CF(1) is attached to CF(0) by a central stalk formed by the gamma and epsilon chains, while a peripheral stalk is formed by the delta and b chains.

The protein resides in the cell inner membrane. It carries out the reaction ATP + H2O + 4 H(+)(in) = ADP + phosphate + 5 H(+)(out). Functionally, produces ATP from ADP in the presence of a proton gradient across the membrane. The alpha chain is a regulatory subunit. In Methylorubrum populi (strain ATCC BAA-705 / NCIMB 13946 / BJ001) (Methylobacterium populi), this protein is ATP synthase subunit alpha.